Consider the following 355-residue polypeptide: GTP 3',8-cyclase (355 aa).

In terms of domain architecture, Radical SAM core spans Arg-16–Pro-242. Arg-25 is a binding site for GTP. Cys-32 and Cys-36 together coordinate [4Fe-4S] cluster. Tyr-38 contacts S-adenosyl-L-methionine. Cys-39 serves as a coordination point for [4Fe-4S] cluster. Residue Arg-76 coordinates GTP. Gly-80 contacts S-adenosyl-L-methionine. GTP is bound at residue Thr-107. Residue Ser-131 coordinates S-adenosyl-L-methionine. Lys-168 is a GTP binding site. Met-202 is a binding site for S-adenosyl-L-methionine. Positions 277 and 280 each coordinate [4Fe-4S] cluster. Arg-282 to Arg-284 is a binding site for GTP. A [4Fe-4S] cluster-binding site is contributed by Cys-294.

The protein belongs to the radical SAM superfamily. MoaA family. In terms of assembly, monomer. The cofactor is [4Fe-4S] cluster.

It carries out the reaction GTP + AH2 + S-adenosyl-L-methionine = (8S)-3',8-cyclo-7,8-dihydroguanosine 5'-triphosphate + 5'-deoxyadenosine + L-methionine + A + H(+). The protein operates within cofactor biosynthesis; molybdopterin biosynthesis. Functionally, catalyzes, together with MoaC, the conversion of 5'-GTP to cyclic pyranopterin monophosphate (cPMP or molybdopterin precursor Z). Its function is as follows. Catalyzes the cyclization of GTP to (8S)-3',8-cyclo-7,8-dihydroguanosine 5'-triphosphate. This Paenarthrobacter nicotinovorans (Arthrobacter nicotinovorans) protein is GTP 3',8-cyclase.